The primary structure comprises 103 residues: Small ribosomal subunit protein uS10 (103 aa).

This sequence belongs to the universal ribosomal protein uS10 family. In terms of assembly, part of the 30S ribosomal subunit.

Its function is as follows. Involved in the binding of tRNA to the ribosomes. The polypeptide is Small ribosomal subunit protein uS10 (Polynucleobacter necessarius subsp. necessarius (strain STIR1)).